The chain runs to 393 residues: NAD(P)H-quinone oxidoreductase subunit H, chloroplastic (393 aa).

The protein belongs to the complex I 49 kDa subunit family. NDH is composed of at least 16 different subunits, 5 of which are encoded in the nucleus.

It is found in the plastid. Its subcellular location is the chloroplast thylakoid membrane. It carries out the reaction a plastoquinone + NADH + (n+1) H(+)(in) = a plastoquinol + NAD(+) + n H(+)(out). The catalysed reaction is a plastoquinone + NADPH + (n+1) H(+)(in) = a plastoquinol + NADP(+) + n H(+)(out). NDH shuttles electrons from NAD(P)H:plastoquinone, via FMN and iron-sulfur (Fe-S) centers, to quinones in the photosynthetic chain and possibly in a chloroplast respiratory chain. The immediate electron acceptor for the enzyme in this species is believed to be plastoquinone. Couples the redox reaction to proton translocation, and thus conserves the redox energy in a proton gradient. The polypeptide is NAD(P)H-quinone oxidoreductase subunit H, chloroplastic (Ipomoea purpurea (Common morning glory)).